A 127-amino-acid polypeptide reads, in one-letter code: EF-hand calcium-binding domain-containing protein 10 (127 aa).

In terms of domain architecture, EF-hand spans 63–98; sequence MDNSNIVAMFEMMDSSGRGTISFVQYKEALKTLGLC.

The polypeptide is EF-hand calcium-binding domain-containing protein 10 (EFCAB10) (Homo sapiens (Human)).